The primary structure comprises 365 residues: 2'-hydroxybiphenyl-2-sulfinate desulfinase (365 aa).

Residue Cys27 is part of the active site. 2'-hydroxybiphenyl-2-sulfinate contacts are provided by Cys27, His60, and Arg70. The active site involves Arg70.

Belongs to the DszB desulfinase family. In terms of assembly, monomer.

It localises to the cytoplasm. It catalyses the reaction 2'-hydroxybiphenyl-2-sulfinate + H2O = biphenyl-2-ol + sulfite + H(+). Its pathway is sulfur metabolism; dibenzothiophene degradation. In terms of biological role, catalyzes the third and final step of the '4S' desulfurization pathway that removes covalently bound sulfur from dibenzothiophene (DBT) without breaking carbon-carbon bonds. Oxidizes 2-(2'-hydroxyphenyl)benzene sulphinate (HBPS) to 2-hydroxybiphenyl (HBP) plus sulfite. The rate-limiting step of the '4S' desulfurization pathway. The polypeptide is 2'-hydroxybiphenyl-2-sulfinate desulfinase (Rhodococcus erythropolis (Arthrobacter picolinophilus)).